The sequence spans 294 residues: UDP-3-O-acyl-N-acetylglucosamine deacetylase (294 aa).

His75, His232, and Asp236 together coordinate Zn(2+). His259 functions as the Proton donor in the catalytic mechanism.

It belongs to the LpxC family. Zn(2+) serves as cofactor.

It carries out the reaction a UDP-3-O-[(3R)-3-hydroxyacyl]-N-acetyl-alpha-D-glucosamine + H2O = a UDP-3-O-[(3R)-3-hydroxyacyl]-alpha-D-glucosamine + acetate. Its pathway is glycolipid biosynthesis; lipid IV(A) biosynthesis; lipid IV(A) from (3R)-3-hydroxytetradecanoyl-[acyl-carrier-protein] and UDP-N-acetyl-alpha-D-glucosamine: step 2/6. Its function is as follows. Catalyzes the hydrolysis of UDP-3-O-myristoyl-N-acetylglucosamine to form UDP-3-O-myristoylglucosamine and acetate, the committed step in lipid A biosynthesis. The sequence is that of UDP-3-O-acyl-N-acetylglucosamine deacetylase from Sulfurovum sp. (strain NBC37-1).